A 403-amino-acid polypeptide reads, in one-letter code: Tyrosine--tRNA ligase (403 aa).

The short motif at 42–51 is the 'HIGH' region element; sequence PTAPDLHLGH. The 'KMSKS' region motif lies at 226–230; that stretch reads KMSKS. Lys-229 serves as a coordination point for ATP. An S4 RNA-binding domain is found at 336–396; the sequence is MPISAVLNKA…GKKAFGRVTL (61 aa).

The protein belongs to the class-I aminoacyl-tRNA synthetase family. TyrS type 2 subfamily. In terms of assembly, homodimer.

It is found in the cytoplasm. The catalysed reaction is tRNA(Tyr) + L-tyrosine + ATP = L-tyrosyl-tRNA(Tyr) + AMP + diphosphate + H(+). Functionally, catalyzes the attachment of tyrosine to tRNA(Tyr) in a two-step reaction: tyrosine is first activated by ATP to form Tyr-AMP and then transferred to the acceptor end of tRNA(Tyr). The sequence is that of Tyrosine--tRNA ligase from Pseudomonas savastanoi pv. phaseolicola (strain 1448A / Race 6) (Pseudomonas syringae pv. phaseolicola (strain 1448A / Race 6)).